A 365-amino-acid polypeptide reads, in one-letter code: Nicotinate N-methyltransferase 1 (365 aa).

D232 contacts S-adenosyl-L-methionine.

Belongs to the class I-like SAM-binding methyltransferase superfamily. Cation-independent O-methyltransferase family.

The catalysed reaction is nicotinate + S-adenosyl-L-methionine = N-methylnicotinate + S-adenosyl-L-homocysteine. Involved in nicotinate detoxification in planta. Catalyzes the conversion of nicotinate to N-methylnicotinate, which is a detoxified form of endogenous nicotinate in planta. The polypeptide is Nicotinate N-methyltransferase 1 (Oryza sativa subsp. japonica (Rice)).